Here is a 280-residue protein sequence, read N- to C-terminus: Acetylglutamate kinase (280 aa).

Residues 64-65 (GG), Arg-86, and Asn-177 each bind substrate.

Belongs to the acetylglutamate kinase family. ArgB subfamily.

It is found in the cytoplasm. The catalysed reaction is N-acetyl-L-glutamate + ATP = N-acetyl-L-glutamyl 5-phosphate + ADP. The protein operates within amino-acid biosynthesis; L-arginine biosynthesis; N(2)-acetyl-L-ornithine from L-glutamate: step 2/4. Its function is as follows. Catalyzes the ATP-dependent phosphorylation of N-acetyl-L-glutamate. In Nautilia profundicola (strain ATCC BAA-1463 / DSM 18972 / AmH), this protein is Acetylglutamate kinase.